A 178-amino-acid chain; its full sequence is Protein GrpE (178 aa).

Residues 1–11 (MSENQNPPPSP) are compositionally biased toward pro residues. A disordered region spans residues 1–23 (MSENQNPPPSPEEIEAAMSANAA).

It belongs to the GrpE family. In terms of assembly, homodimer.

It is found in the cytoplasm. Participates actively in the response to hyperosmotic and heat shock by preventing the aggregation of stress-denatured proteins, in association with DnaK and GrpE. It is the nucleotide exchange factor for DnaK and may function as a thermosensor. Unfolded proteins bind initially to DnaJ; upon interaction with the DnaJ-bound protein, DnaK hydrolyzes its bound ATP, resulting in the formation of a stable complex. GrpE releases ADP from DnaK; ATP binding to DnaK triggers the release of the substrate protein, thus completing the reaction cycle. Several rounds of ATP-dependent interactions between DnaJ, DnaK and GrpE are required for fully efficient folding. The polypeptide is Protein GrpE (Acidovorax sp. (strain JS42)).